The primary structure comprises 153 residues: Endoribonuclease YbeY (153 aa).

Residues histidine 118, histidine 122, and histidine 128 each contribute to the Zn(2+) site.

This sequence belongs to the endoribonuclease YbeY family. Zn(2+) serves as cofactor.

The protein localises to the cytoplasm. Functionally, single strand-specific metallo-endoribonuclease involved in late-stage 70S ribosome quality control and in maturation of the 3' terminus of the 16S rRNA. This Oenococcus oeni (strain ATCC BAA-331 / PSU-1) protein is Endoribonuclease YbeY.